Consider the following 156-residue polypeptide: Small ribosomal subunit protein uS17A (156 aa).

S2 bears the N-acetylserine mark. Residues K15, K46, K56, K57, K79, K96, K105, K133, K141, and K148 each participate in a glycyl lysine isopeptide (Lys-Gly) (interchain with G-Cter in ubiquitin) cross-link.

The protein belongs to the universal ribosomal protein uS17 family. As to quaternary structure, component of the small ribosomal subunit (SSU). Mature yeast ribosomes consist of a small (40S) and a large (60S) subunit. The 40S small subunit contains 1 molecule of ribosomal RNA (18S rRNA) and 33 different proteins (encoded by 57 genes). The large 60S subunit contains 3 rRNA molecules (25S, 5.8S and 5S rRNA) and 46 different proteins (encoded by 81 genes). Post-translationally, N-terminally acetylated by acetyltransferase NatA.

It is found in the cytoplasm. Component of the ribosome, a large ribonucleoprotein complex responsible for the synthesis of proteins in the cell. The small ribosomal subunit (SSU) binds messenger RNAs (mRNAs) and translates the encoded message by selecting cognate aminoacyl-transfer RNA (tRNA) molecules. The large subunit (LSU) contains the ribosomal catalytic site termed the peptidyl transferase center (PTC), which catalyzes the formation of peptide bonds, thereby polymerizing the amino acids delivered by tRNAs into a polypeptide chain. The nascent polypeptides leave the ribosome through a tunnel in the LSU and interact with protein factors that function in enzymatic processing, targeting, and the membrane insertion of nascent chains at the exit of the ribosomal tunnel. The protein is Small ribosomal subunit protein uS17A of Saccharomyces cerevisiae (strain ATCC 204508 / S288c) (Baker's yeast).